A 132-amino-acid chain; its full sequence is Large ribosomal subunit protein uL14 (132 aa).

Belongs to the universal ribosomal protein uL14 family. Part of the 50S ribosomal subunit. Forms a cluster with proteins L3 and L24e, part of which may contact the 16S rRNA in 2 intersubunit bridges.

Functionally, binds to 23S rRNA. Forms part of two intersubunit bridges in the 70S ribosome. The polypeptide is Large ribosomal subunit protein uL14 (Methanococcus aeolicus (strain ATCC BAA-1280 / DSM 17508 / OCM 812 / Nankai-3)).